The chain runs to 692 residues: DNA ligase (692 aa).

Residues 34–38 (DAEYD), 83–84 (SL), and Glu124 each bind NAD(+). Catalysis depends on Lys126, which acts as the N6-AMP-lysine intermediate. Arg147, Glu193, Lys310, and Lys334 together coordinate NAD(+). Zn(2+) is bound by residues Cys428, Cys431, Cys446, and Cys452. Residues 612-692 (AGVAGVSGKT…ALLALLAGNA (81 aa)) enclose the BRCT domain.

Belongs to the NAD-dependent DNA ligase family. LigA subfamily. Mg(2+) is required as a cofactor. It depends on Mn(2+) as a cofactor.

The enzyme catalyses NAD(+) + (deoxyribonucleotide)n-3'-hydroxyl + 5'-phospho-(deoxyribonucleotide)m = (deoxyribonucleotide)n+m + AMP + beta-nicotinamide D-nucleotide.. DNA ligase that catalyzes the formation of phosphodiester linkages between 5'-phosphoryl and 3'-hydroxyl groups in double-stranded DNA using NAD as a coenzyme and as the energy source for the reaction. It is essential for DNA replication and repair of damaged DNA. This is DNA ligase from Laribacter hongkongensis (strain HLHK9).